The sequence spans 942 residues: UvrABC system protein A (942 aa).

31–38 (GLSGSGKS) is a binding site for ATP. A C4-type zinc finger spans residues 253–280 (CSECGYSLPELEPRLFSFNNPAGACPTC). ABC transporter domains lie at 310–586 (WDRR…EASI) and 606–936 (YDAN…RFLT). 639–646 (GVSGSGKS) lines the ATP pocket. The C4-type zinc finger occupies 739–765 (CEACQGDGVIKVEMHFLPDVYVPCDHC).

This sequence belongs to the ABC transporter superfamily. UvrA family. In terms of assembly, forms a heterotetramer with UvrB during the search for lesions.

The protein resides in the cytoplasm. Functionally, the UvrABC repair system catalyzes the recognition and processing of DNA lesions. UvrA is an ATPase and a DNA-binding protein. A damage recognition complex composed of 2 UvrA and 2 UvrB subunits scans DNA for abnormalities. When the presence of a lesion has been verified by UvrB, the UvrA molecules dissociate. The chain is UvrABC system protein A from Haemophilus ducreyi (strain 35000HP / ATCC 700724).